A 327-amino-acid chain; its full sequence is Eukaryotic translation initiation factor 3 subunit I (327 aa).

WD repeat units lie at residues 8–49, 51–89, 188–227, 229–268, and 285–324; these read GHER…GSYD, HNGAVWDIDVSWDTTKCVTASGDLTVKIWDAELGNCLYT, VHRYSVQDLQLSPRGDFLISASRDKTAALLDVNDLKKLKQ, KSERPVNSACISPNRDHICLGGGEDAMQVTQTSVSAGHFE, and GHFGPINTMAWHPSGTIIATGGEDGYIRIQEFDEDYLGFT.

Belongs to the eIF-3 subunit I family. In terms of assembly, component of the eukaryotic translation initiation factor 3 (eIF-3) complex.

It localises to the cytoplasm. Component of the eukaryotic translation initiation factor 3 (eIF-3) complex, which is involved in protein synthesis of a specialized repertoire of mRNAs and, together with other initiation factors, stimulates binding of mRNA and methionyl-tRNAi to the 40S ribosome. The eIF-3 complex specifically targets and initiates translation of a subset of mRNAs involved in cell proliferation. The chain is Eukaryotic translation initiation factor 3 subunit I from Caenorhabditis elegans.